Consider the following 266-residue polypeptide: Methyl-coenzyme M reductase II subunit gamma (266 aa).

Residue Arg-123 participates in coenzyme M binding.

Belongs to the methyl-coenzyme M reductase gamma subunit family. In terms of assembly, MCR is a hexamer of two alpha, two beta, and two gamma chains, forming a dimer of heterotrimers. The cofactor is coenzyme F430.

It carries out the reaction coenzyme B + methyl-coenzyme M = methane + coenzyme M-coenzyme B heterodisulfide. The protein operates within one-carbon metabolism; methyl-coenzyme M reduction; methane from methyl-coenzyme M: step 1/1. In terms of biological role, component of the methyl-coenzyme M reductase (MCR) I that catalyzes the reductive cleavage of methyl-coenzyme M (CoM-S-CH3 or 2-(methylthio)ethanesulfonate) using coenzyme B (CoB or 7-mercaptoheptanoylthreonine phosphate) as reductant which results in the production of methane and the mixed heterodisulfide of CoB and CoM (CoM-S-S-CoB). This is the final step in methanogenesis. This Methanocaldococcus jannaschii (strain ATCC 43067 / DSM 2661 / JAL-1 / JCM 10045 / NBRC 100440) (Methanococcus jannaschii) protein is Methyl-coenzyme M reductase II subunit gamma (mrtG).